The primary structure comprises 212 residues: Uracil phosphoribosyltransferase (212 aa).

Residues Arg78, Arg103, and 130–138 (DPMLATGSS) each bind 5-phospho-alpha-D-ribose 1-diphosphate. Uracil is bound by residues Ile193 and 198 to 200 (GDA). Asp199 is a binding site for 5-phospho-alpha-D-ribose 1-diphosphate.

This sequence belongs to the UPRTase family. Mg(2+) serves as cofactor.

The catalysed reaction is UMP + diphosphate = 5-phospho-alpha-D-ribose 1-diphosphate + uracil. It functions in the pathway pyrimidine metabolism; UMP biosynthesis via salvage pathway; UMP from uracil: step 1/1. With respect to regulation, allosterically activated by GTP. In terms of biological role, catalyzes the conversion of uracil and 5-phospho-alpha-D-ribose 1-diphosphate (PRPP) to UMP and diphosphate. This Pseudomonas fluorescens (strain SBW25) protein is Uracil phosphoribosyltransferase.